Reading from the N-terminus, the 339-residue chain is Phenylalanine--tRNA ligase alpha subunit (339 aa).

Residue Glu247 participates in Mg(2+) binding.

The protein belongs to the class-II aminoacyl-tRNA synthetase family. Phe-tRNA synthetase alpha subunit type 1 subfamily. Tetramer of two alpha and two beta subunits. Mg(2+) is required as a cofactor.

The protein resides in the cytoplasm. The enzyme catalyses tRNA(Phe) + L-phenylalanine + ATP = L-phenylalanyl-tRNA(Phe) + AMP + diphosphate + H(+). This is Phenylalanine--tRNA ligase alpha subunit from Deinococcus geothermalis (strain DSM 11300 / CIP 105573 / AG-3a).